Reading from the N-terminus, the 257-residue chain is MFSTFGSVPILTVVAIQLFLIRNVLSLNLTNAYLHHKCNNTQGIYKRGSAFEKNLNIALRTVIFNGDFRTGFRYGDVGEDPNTVFVMYQCRGDSYWSNCRTCVTTALSGLRKRCPGNKGAIIWYDQCLFEISTVDSYHKIDYENDFYLSNPKNVSNRELFNRETSALLEKLTTKATDKKNIDGANQLVLYAAGEKRIGTKKVYAMVQCTKDLVFTTCSSCLEWIFRMYSDCCDGKQGGRVLGTSCNFRYELYPFLRN.

The N-terminal stretch at 1–26 (MFSTFGSVPILTVVAIQLFLIRNVLS) is a signal peptide. Gnk2-homologous domains are found at residues 32–136 (AYLH…TVDS) and 142–254 (YEND…LYPF).

Belongs to the cysteine-rich repeat secretory protein family.

It is found in the secreted. This chain is Putative cysteine-rich repeat secretory protein 28 (CRRSP28), found in Arabidopsis thaliana (Mouse-ear cress).